Reading from the N-terminus, the 501-residue chain is Carboxypeptidase 1 (501 aa).

Positions 3 to 496 (IHTYEKEFFD…LIDYLSNKYS (494 aa)) constitute a Peptidase M32 domain. The HPF motif lies at 234 to 236 (HPF). The DXRXT signature appears at 244–248 (DVRVT). Histidine 265 is a binding site for Zn(2+). Residues 265-269 (HECGH) carry the HEXXH motif. Glutamate 266 acts as the Proton donor/acceptor in catalysis. Residues histidine 269 and glutamate 295 each coordinate Zn(2+). An HES/GQ motif is present at residues 294–297 (HESQ). The I/NRXXA/SD signature appears at 347-352 (IRVEAD). Positions 402–409 (GILQDVHW) match the GXXQDXHW motif.

The protein belongs to the peptidase M32 family. In terms of assembly, homodimer. Requires Zn(2+) as cofactor.

It carries out the reaction Release of a C-terminal amino acid with broad specificity, except for -Pro.. Its function is as follows. Broad specificity carboxypetidase that releases amino acids sequentially from the C-terminus, including neutral, aromatic, polar and basic residues. Has lower activity with substrates ending with His or Trp. The polypeptide is Carboxypeptidase 1 (ypwA) (Bacillus subtilis (strain 168)).